The sequence spans 1030 residues: ATPase MORC2A (1030 aa).

An N-acetylalanine modification is found at Ala-2. Residues Asn-39, 87-89, and 99-105 contribute to the ATP site; these read SAK and QYGNGLK. Asn-39 contributes to the Mg(2+) binding site. Residues 285-362 adopt a coiled-coil conformation; the sequence is KTRAEQEVKK…KDAKQRALKE (78 aa). Lys-427 lines the ATP pocket. The CW-type zinc finger occupies 490-544; sequence AMEIPTTIQCDLCLKWRTLPFQLSSVETDYPDTWVCSMNPDPEQDRCEASEQKQK. Zn(2+)-binding residues include Cys-499, Cys-502, Cys-525, and Cys-536. The disordered stretch occupies residues 530 to 791; sequence DPEQDRCEAS…HPAELRKAQK (262 aa). Basic and acidic residues-rich tracts occupy residues 532 to 543 and 550 to 577; these read EQDRCEASEQKQ and LKKD…KLEA. Residues 555 to 583 are a coiled coil; sequence KTQEEKQKQLTEKIRQQQEKLEALQKTTP. Phosphothreonine is present on Thr-582. Residue Ser-614 is modified to Phosphoserine. Residues 629–646 are compositionally biased toward polar residues; that stretch reads PSIQTPRPSTQLRKTSVI. Glycyl lysine isopeptide (Lys-Gly) (interchain with G-Cter in SUMO2) cross-links involve residues Lys-650 and Lys-702. The span at 693–702 shows a compositional bias: low complexity; the sequence is PPLSLIPSSK. Ser-703 bears the Phosphoserine mark. Residue Lys-714 forms a Glycyl lysine isopeptide (Lys-Gly) (interchain with G-Cter in SUMO2) linkage. Phosphoserine is present on Ser-728. At Thr-731 the chain carries Phosphothreonine. Phosphoserine is present on residues Ser-737 and Ser-741. The stretch at 738-775 forms a coiled coil; the sequence is LAVSDEEEAEEEAEKRRERCKRGKLAVKEEKKEANELS. Residues 763–772 are compositionally biased toward basic and acidic residues; sequence AVKEEKKEAN. Lys-765 is covalently cross-linked (Glycyl lysine isopeptide (Lys-Gly) (interchain with G-Cter in SUMO2)). 2 positions are modified to phosphoserine: Ser-775 and Ser-777. Residues 779–791 are compositionally biased toward basic and acidic residues; that stretch reads GEDHPAELRKAQK. Lys-817 is covalently cross-linked (Glycyl lysine isopeptide (Lys-Gly) (interchain with G-Cter in SUMO2)). Thr-834 carries the phosphothreonine modification. Residues 837 to 849 show a composition bias toward basic and acidic residues; sequence DRWVEKGSEDVRL. Disordered regions lie at residues 837–874 and 882–901; these read DRWV…EAMV and PEPS…ATSP. A phosphoserine mark is found at Ser-854 and Ser-859. Residues 856 to 865 are compositionally biased toward polar residues; the sequence is EHQSPDTQQE. A Glycyl lysine isopeptide (Lys-Gly) (interchain with G-Cter in SUMO2) cross-link involves residue Lys-930. The stretch at 966–1011 forms a coiled coil; sequence RADSRAKASEESLRTSEKKLRETEEKLQKLRTNIVALLQKVQEDID.

As to quaternary structure, homodimerizes upon ATP-binding and dissociate upon ATP hydrolysis; homodimerization is required for gene silencing. Binds histone H3 independently of the methylation status at 'Lys-9'. Interacts with HDAC4. Interacts with FAM208A/TASOR and MPHOSPH8; the interactions associate MORC2 with the HUSH complex which recruits MORC2 to heterochromatic loci. Interacts with Morc2b. Post-translationally, phosphorylated by PAK1 at Ser-737 upon DNA damage. Phosphorylation is required for ATPase activity and recruitment to damaged chromatin. In terms of tissue distribution, expressed in the axons and Schwann cells of peripheral nerves. Expressed in testes.

The protein resides in the nucleus. It is found in the cytoplasm. The protein localises to the cytosol. Its subcellular location is the chromosome. It localises to the nucleus matrix. The catalysed reaction is ATP + H2O = ADP + phosphate + H(+). Its activity is regulated as follows. ATPase activity is dependent of phosphorylation by PAK1 and presence of DNA. In terms of biological role, essential for epigenetic silencing by the HUSH complex. Recruited by HUSH to target site in heterochromatin, the ATPase activity and homodimerization are critical for HUSH-mediated silencing. Represses germ cell-related genes and L1 retrotransposons in collaboration with SETDB1 and the HUSH complex, the silencing is dependent of repressive epigenetic modifications, such as H3K9me3 mark. Silencing events often occur within introns of transcriptionally active genes, and lead to the down-regulation of host gene expression. During DNA damage response, regulates chromatin remodeling through ATP hydrolysis. During DNA damage response, may regulate chromatin remodeling through ATP hydrolysis. The protein is ATPase MORC2A of Mus musculus (Mouse).